Here is a 315-residue protein sequence, read N- to C-terminus: Protoheme IX farnesyltransferase 1 (315 aa).

The next 8 helical transmembrane spans lie at Pro30–Gln50, Gly56–Ala76, Ile106–Leu126, Leu132–Phe152, Val162–Ile182, Ala186–Ile206, Leu249–Leu269, and Phe289–Ile309.

The protein belongs to the UbiA prenyltransferase family. Protoheme IX farnesyltransferase subfamily. In terms of assembly, interacts with CtaA.

It localises to the cell membrane. It catalyses the reaction heme b + (2E,6E)-farnesyl diphosphate + H2O = Fe(II)-heme o + diphosphate. It functions in the pathway porphyrin-containing compound metabolism; heme O biosynthesis; heme O from protoheme: step 1/1. In terms of biological role, converts heme B (protoheme IX) to heme O by substitution of the vinyl group on carbon 2 of heme B porphyrin ring with a hydroxyethyl farnesyl side group. This Bacillus velezensis (strain DSM 23117 / BGSC 10A6 / LMG 26770 / FZB42) (Bacillus amyloliquefaciens subsp. plantarum) protein is Protoheme IX farnesyltransferase 1.